The primary structure comprises 493 residues: D-glyceraldehyde dehydrogenase (NADP(+)) (493 aa).

NADP(+) is bound by residues 144–147, arginine 155, 170–174, 202–208, 223–246, cysteine 279, and 379–381; these read TPWN, KPSSD, KGSEIGD, GSTSTGQRIMEKASKNMAKLILEL, and EIF. Substrate contacts are provided by asparagine 147 and arginine 155. Glutamate 245 (proton acceptor) is an active-site residue. Substrate is bound at residue cysteine 279. Cysteine 279 (proton donor) is an active-site residue.

Belongs to the aldehyde dehydrogenase family. Glyceraldehyde dehydrogenase subfamily. In terms of assembly, homotetramer. Dimer of dimers.

The catalysed reaction is D-glyceraldehyde + NADP(+) + H2O = (R)-glycerate + NADPH + 2 H(+). The protein operates within carbohydrate degradation; glycolysis. Its activity is regulated as follows. Stable for 2 hours at 60 degrees Celsius but activity is decreased to less than 50 percent within 15 minutes at 70 degrees Celsius. In terms of biological role, NADP-dependent dehydrogenase of the nED (non-phosphorylated Entner-Doudoroff) pathway with highest activity towards glyceraldehydes (e.g. D,L-glyceraldehyde and D-glyceraldehyde), to a lesser extent towards D,L-glyceraldehyde-3-phosphate and glycolaldehyde, but no activity towards aliphatic or aromatic aldehydes. This is D-glyceraldehyde dehydrogenase (NADP(+)) from Picrophilus torridus (strain ATCC 700027 / DSM 9790 / JCM 10055 / NBRC 100828 / KAW 2/3).